A 297-amino-acid polypeptide reads, in one-letter code: Lipoyl synthase (297 aa).

[4Fe-4S] cluster is bound by residues Cys-40, Cys-45, Cys-51, Cys-67, Cys-71, Cys-74, and Ser-280. The region spanning 53-269 (AVRKTATFMI…KEIALSKGFS (217 aa)) is the Radical SAM core domain.

Belongs to the radical SAM superfamily. Lipoyl synthase family. It depends on [4Fe-4S] cluster as a cofactor.

It is found in the cytoplasm. It carries out the reaction [[Fe-S] cluster scaffold protein carrying a second [4Fe-4S](2+) cluster] + N(6)-octanoyl-L-lysyl-[protein] + 2 oxidized [2Fe-2S]-[ferredoxin] + 2 S-adenosyl-L-methionine + 4 H(+) = [[Fe-S] cluster scaffold protein] + N(6)-[(R)-dihydrolipoyl]-L-lysyl-[protein] + 4 Fe(3+) + 2 hydrogen sulfide + 2 5'-deoxyadenosine + 2 L-methionine + 2 reduced [2Fe-2S]-[ferredoxin]. It participates in protein modification; protein lipoylation via endogenous pathway; protein N(6)-(lipoyl)lysine from octanoyl-[acyl-carrier-protein]. Its function is as follows. Catalyzes the radical-mediated insertion of two sulfur atoms into the C-6 and C-8 positions of the octanoyl moiety bound to the lipoyl domains of lipoate-dependent enzymes, thereby converting the octanoylated domains into lipoylated derivatives. The sequence is that of Lipoyl synthase from Bacillus cereus (strain ATCC 14579 / DSM 31 / CCUG 7414 / JCM 2152 / NBRC 15305 / NCIMB 9373 / NCTC 2599 / NRRL B-3711).